A 672-amino-acid polypeptide reads, in one-letter code: tRNA 5-methylaminomethyl-2-thiouridine biosynthesis bifunctional protein MnmC (672 aa).

A tRNA (mnm(5)s(2)U34)-methyltransferase region spans residues 1–235 (MTRVLEPAEP…KRDMTVARFA (235 aa)). The interval 259–672 (IGAGLAGCAV…SAGPGVDAAG (414 aa)) is FAD-dependent cmnm(5)s(2)U34 oxidoreductase.

It in the N-terminal section; belongs to the methyltransferase superfamily. tRNA (mnm(5)s(2)U34)-methyltransferase family. This sequence in the C-terminal section; belongs to the DAO family. FAD serves as cofactor.

The protein resides in the cytoplasm. It carries out the reaction 5-aminomethyl-2-thiouridine(34) in tRNA + S-adenosyl-L-methionine = 5-methylaminomethyl-2-thiouridine(34) in tRNA + S-adenosyl-L-homocysteine + H(+). Functionally, catalyzes the last two steps in the biosynthesis of 5-methylaminomethyl-2-thiouridine (mnm(5)s(2)U) at the wobble position (U34) in tRNA. Catalyzes the FAD-dependent demodification of cmnm(5)s(2)U34 to nm(5)s(2)U34, followed by the transfer of a methyl group from S-adenosyl-L-methionine to nm(5)s(2)U34, to form mnm(5)s(2)U34. This chain is tRNA 5-methylaminomethyl-2-thiouridine biosynthesis bifunctional protein MnmC, found in Cupriavidus metallidurans (strain ATCC 43123 / DSM 2839 / NBRC 102507 / CH34) (Ralstonia metallidurans).